The primary structure comprises 253 residues: 3-deoxy-manno-octulosonate cytidylyltransferase (253 aa).

It belongs to the KdsB family.

The protein resides in the cytoplasm. It carries out the reaction 3-deoxy-alpha-D-manno-oct-2-ulosonate + CTP = CMP-3-deoxy-beta-D-manno-octulosonate + diphosphate. It functions in the pathway nucleotide-sugar biosynthesis; CMP-3-deoxy-D-manno-octulosonate biosynthesis; CMP-3-deoxy-D-manno-octulosonate from 3-deoxy-D-manno-octulosonate and CTP: step 1/1. Its pathway is bacterial outer membrane biogenesis; lipopolysaccharide biosynthesis. Functionally, activates KDO (a required 8-carbon sugar) for incorporation into bacterial lipopolysaccharide in Gram-negative bacteria. The chain is 3-deoxy-manno-octulosonate cytidylyltransferase from Neisseria meningitidis serogroup C / serotype 2a (strain ATCC 700532 / DSM 15464 / FAM18).